The sequence spans 388 residues: Succinate--CoA ligase [ADP-forming] subunit beta (388 aa).

The 236-residue stretch at 9–244 (KQLFREYGLP…TTQDDEREMH (236 aa)) folds into the ATP-grasp domain. Residues lysine 46, 53–55 (GRG), glutamate 99, serine 102, and glutamate 107 each bind ATP. Mg(2+) is bound by residues asparagine 199 and aspartate 213. Residues asparagine 264 and 321–323 (GIV) each bind substrate.

The protein belongs to the succinate/malate CoA ligase beta subunit family. In terms of assembly, heterotetramer of two alpha and two beta subunits. The cofactor is Mg(2+).

It catalyses the reaction succinate + ATP + CoA = succinyl-CoA + ADP + phosphate. The catalysed reaction is GTP + succinate + CoA = succinyl-CoA + GDP + phosphate. It participates in carbohydrate metabolism; tricarboxylic acid cycle; succinate from succinyl-CoA (ligase route): step 1/1. Its function is as follows. Succinyl-CoA synthetase functions in the citric acid cycle (TCA), coupling the hydrolysis of succinyl-CoA to the synthesis of either ATP or GTP and thus represents the only step of substrate-level phosphorylation in the TCA. The beta subunit provides nucleotide specificity of the enzyme and binds the substrate succinate, while the binding sites for coenzyme A and phosphate are found in the alpha subunit. The polypeptide is Succinate--CoA ligase [ADP-forming] subunit beta (Psychromonas ingrahamii (strain DSM 17664 / CCUG 51855 / 37)).